The chain runs to 398 residues: Acetate kinase (398 aa).

Asn-10 serves as a coordination point for Mg(2+). Lys-17 is a binding site for ATP. Substrate is bound at residue Arg-91. Asp-148 (proton donor/acceptor) is an active-site residue. Residues 208-212 (HLGNG), 283-285 (DCR), and 331-335 (GIGEN) contribute to the ATP site. Glu-385 is a binding site for Mg(2+).

This sequence belongs to the acetokinase family. In terms of assembly, homodimer. The cofactor is Mg(2+). Requires Mn(2+) as cofactor.

Its subcellular location is the cytoplasm. It catalyses the reaction acetate + ATP = acetyl phosphate + ADP. The protein operates within metabolic intermediate biosynthesis; acetyl-CoA biosynthesis; acetyl-CoA from acetate: step 1/2. Its function is as follows. Catalyzes the formation of acetyl phosphate from acetate and ATP. Can also catalyze the reverse reaction. In Shewanella loihica (strain ATCC BAA-1088 / PV-4), this protein is Acetate kinase.